Consider the following 529-residue polypeptide: Peptide chain release factor 3 (529 aa).

Positions 11 to 279 constitute a tr-type G domain; the sequence is AKRRTFAIIS…GLVDWAPKPQ (269 aa). Residues 20–27, 88–92, and 142–145 each bind GTP; these read SHPDAGKT, DTPGH, and NKLD.

This sequence belongs to the TRAFAC class translation factor GTPase superfamily. Classic translation factor GTPase family. PrfC subfamily.

Its subcellular location is the cytoplasm. Its function is as follows. Increases the formation of ribosomal termination complexes and stimulates activities of RF-1 and RF-2. It binds guanine nucleotides and has strong preference for UGA stop codons. It may interact directly with the ribosome. The stimulation of RF-1 and RF-2 is significantly reduced by GTP and GDP, but not by GMP. In Idiomarina loihiensis (strain ATCC BAA-735 / DSM 15497 / L2-TR), this protein is Peptide chain release factor 3.